Reading from the N-terminus, the 284-residue chain is D-tagatose-1,6-bisphosphate aldolase subunit GatY (284 aa).

The Proton donor role is filled by Asp-82. Zn(2+)-binding residues include His-83 and His-180. Cys-181 is a dihydroxyacetone phosphate binding site. A Zn(2+)-binding site is contributed by His-208. Residues 209–211 (GAS) and 230–233 (NVAT) each bind dihydroxyacetone phosphate.

This sequence belongs to the class II fructose-bisphosphate aldolase family. TagBP aldolase GatY subfamily. As to quaternary structure, forms a complex with GatZ. Requires Zn(2+) as cofactor.

It carries out the reaction D-tagatofuranose 1,6-bisphosphate = D-glyceraldehyde 3-phosphate + dihydroxyacetone phosphate. The protein operates within carbohydrate metabolism; D-tagatose 6-phosphate degradation; D-glyceraldehyde 3-phosphate and glycerone phosphate from D-tagatose 6-phosphate: step 2/2. Its function is as follows. Catalytic subunit of the tagatose-1,6-bisphosphate aldolase GatYZ, which catalyzes the reversible aldol condensation of dihydroxyacetone phosphate (DHAP or glycerone-phosphate) with glyceraldehyde 3-phosphate (G3P) to produce tagatose 1,6-bisphosphate (TBP). Requires GatZ subunit for full activity and stability. Is involved in the catabolism of galactitol. This chain is D-tagatose-1,6-bisphosphate aldolase subunit GatY, found in Salmonella paratyphi A (strain ATCC 9150 / SARB42).